The primary structure comprises 381 residues: L-lactate dehydrogenase (381 aa).

The FMN hydroxy acid dehydrogenase domain maps to 1-380 (MIISSASDYR…KPEALVDLSK (380 aa)). Tyr24 is a substrate binding site. 2 residues coordinate FMN: Ser106 and Gln127. Residue Tyr129 participates in substrate binding. Thr155 contacts FMN. Arg164 serves as a coordination point for substrate. Lys251 contributes to the FMN binding site. The active-site Proton acceptor is His275. Arg278 serves as a coordination point for substrate. Residue 306–330 (DSGIRNGLDIVRMLALGADATMLGR) coordinates FMN.

This sequence belongs to the FMN-dependent alpha-hydroxy acid dehydrogenase family. Requires FMN as cofactor.

Its subcellular location is the cell inner membrane. It catalyses the reaction (S)-lactate + A = pyruvate + AH2. Its function is as follows. Catalyzes the conversion of L-lactate to pyruvate. Is coupled to the respiratory chain. This is L-lactate dehydrogenase from Haemophilus influenzae (strain ATCC 51907 / DSM 11121 / KW20 / Rd).